An 873-amino-acid polypeptide reads, in one-letter code: DNA mismatch repair protein MutS (873 aa).

Residue 625 to 632 (GPNMGGKS) participates in ATP binding.

Belongs to the DNA mismatch repair MutS family.

In terms of biological role, this protein is involved in the repair of mismatches in DNA. It is possible that it carries out the mismatch recognition step. This protein has a weak ATPase activity. In Xanthomonas euvesicatoria pv. vesicatoria (strain 85-10) (Xanthomonas campestris pv. vesicatoria), this protein is DNA mismatch repair protein MutS.